Reading from the N-terminus, the 158-residue chain is Tryptophan-rich protein TspO (158 aa).

5 helical membrane-spanning segments follow: residues 5-25, 48-68, 79-99, 105-125, and 134-154; these read ILTLALCIGLCLAVGFAGSTF, LFPPVWTILFIMMGTALAKVL, VGVVLFAIQLMLNLGWSASFF, LAGLVDIVLLWIFIVLTMLAF, and LLLVPYLCWVSFASYLNFTIL.

This sequence belongs to the TspO/BZRP family.

It is found in the membrane. The protein localises to the cell membrane. Functionally, binds tetrapyrroles and promotes the photooxidative degradation of protoporphyrin IX. Can bind the benzodiazepine receptor agonist PK-11195 (in vitro); this interferes with photooxidative tetrapyrrole degradation. May play a role in the transmembrane transport of tetrapyrroles and similar compounds. This Chlorobaculum tepidum (strain ATCC 49652 / DSM 12025 / NBRC 103806 / TLS) (Chlorobium tepidum) protein is Tryptophan-rich protein TspO.